A 406-amino-acid chain; its full sequence is Zinc finger CCCH domain-containing protein 15 homolog (406 aa).

The segment covering methionine 1 to serine 11 has biased composition (low complexity). Positions methionine 1–lysine 70 are disordered. Over residues lysine 12–phenylalanine 28 the composition is skewed to basic and acidic residues. Low complexity predominate over residues glutamine 38–glutamine 50. Basic and acidic residues predominate over residues proline 56–lysine 70. Residues arginine 57–lysine 82 are a coiled coil. 2 consecutive C3H1-type zinc fingers follow at residues aspartate 94–serine 121 and proline 166–proline 203. Residues valine 336–alanine 382 form a disordered region. Low complexity-rich tracts occupy residues alanine 352–glycine 364 and proline 372–alanine 382.

This sequence belongs to the ZC3H15/TMA46 family.

The protein is Zinc finger CCCH domain-containing protein 15 homolog of Drosophila pseudoobscura pseudoobscura (Fruit fly).